We begin with the raw amino-acid sequence, 448 residues long: Nicotinate phosphoribosyltransferase pncB1 (448 aa).

A disordered region spans residues 1 to 21; it reads MGPPPAARRREGEPDNQDPAG. Position 212 is a phosphohistidine (His212). The tract at residues 353–372 is disordered; sequence RSSYKESPGGRKEALRRSRA.

It belongs to the NAPRTase family. Transiently phosphorylated on a His residue during the reaction cycle. Phosphorylation strongly increases the affinity for substrates and increases the rate of nicotinate D-ribonucleotide production. Dephosphorylation regenerates the low-affinity form of the enzyme, leading to product release.

The catalysed reaction is nicotinate + 5-phospho-alpha-D-ribose 1-diphosphate + ATP + H2O = nicotinate beta-D-ribonucleotide + ADP + phosphate + diphosphate. It participates in cofactor biosynthesis; NAD(+) biosynthesis; nicotinate D-ribonucleotide from nicotinate: step 1/1. Functionally, involved in the Preiss-Handler pathway, which is a recycling route that permits the salvage of free nicotinamide (NM) and nicotinic acid (Na) involved in the NAD biosynthesis. Catalyzes the synthesis of beta-nicotinate D-ribonucleotide from nicotinate and 5-phospho-D-ribose 1-phosphate at the expense of ATP. It is not able to use nicotinamide. PncB1 contributes to basal NAD level. This is Nicotinate phosphoribosyltransferase pncB1 (pncB1) from Mycobacterium tuberculosis (strain CDC 1551 / Oshkosh).